The chain runs to 442 residues: Citrate synthase (442 aa).

Catalysis depends on residues H274, H320, and D375.

The protein belongs to the citrate synthase family.

It carries out the reaction oxaloacetate + acetyl-CoA + H2O = citrate + CoA + H(+). It functions in the pathway carbohydrate metabolism; tricarboxylic acid cycle; isocitrate from oxaloacetate: step 1/2. Functionally, catalyzes both citrate generation and citrate cleavage. Part of a reversible tricarboxylic acid (TCA) cycle that can fix carbon dioxide autotrophically and may represent an ancestral mode of the conventional reductive TCA (rTCA) cycle. The direction is controlled by the available carbon source(s). This is Citrate synthase from Thermosulfidibacter takaii (strain DSM 17441 / JCM 13301 / NBRC 103674 / ABI70S6).